We begin with the raw amino-acid sequence, 81 residues long: Antimicrobial peptide Con22 (81 aa).

Positions 1-22 (MNAKVMLVCLLVTMLVMEPAEA) are cleaved as a signal peptide. A propeptide spanning residues 66–81 (EAGQIPFDEFMNVLYS) is cleaved from the precursor.

The protein belongs to the non-disulfide-bridged peptide (NDBP) superfamily. Long chain multifunctional peptide (group 2) family. Expressed by the venom gland.

It localises to the secreted. The protein localises to the target cell membrane. Its function is as follows. At high concentrations, acts as a pore former in cellular membranes and causes the leakage of the cells. At submicromolar concentrations, degranulates granulocytes and has a weak hemolytic activity against human erythrocytes. Also strongly inhibits the production of superoxide anions. Has a strong antibacterial activity against Gram-negative bacteria but is less active against Gram-positive bacteria. Also has antifungal activity. The protein is Antimicrobial peptide Con22 of Urodacus yaschenkoi (Inland robust scorpion).